The primary structure comprises 340 residues: Sodium/bile acid cotransporter 7 (340 aa).

Residues 1-10 are Cytoplasmic-facing; the sequence is MRLLERVRKE. Residues 11–31 traverse the membrane as a helical segment; that stretch reads WFMVGIVVAIGAAKLEPSVGV. At 32–37 the chain is on the extracellular side; sequence NGGPLK. Residues 38 to 58 traverse the membrane as a helical segment; it reads PEITVSYIAVATIFFNSGLSL. Over 59–71 the chain is Cytoplasmic; it reads KTEELTSALVHLK. The helical transmembrane segment at 72–92 threads the bilayer; that stretch reads LHLFIQVFTLAFFPTTIWLFL. The Extracellular portion of the chain corresponds to 93–116; sequence QLLSVTSINEWLLKGLQTVGCMPP. Residues 117–137 traverse the membrane as a helical segment; it reads PVSSAVILTKAVGGNEAAAIF. N138 is a topological domain (cytoplasmic). The helical transmembrane segment at 139 to 159 threads the bilayer; the sequence is SAFGSFLGIVVTPVLLLLFLG. Residues 160–163 are Extracellular-facing; that stretch reads SSSS. A helical transmembrane segment spans residues 164-184; sequence VPFTSIFSQLFMTVVVPLVIG. Over 185–201 the chain is Cytoplasmic; that stretch reads QIVRRYIKDWLERKKPP. A helical transmembrane segment spans residues 202–222; it reads FGVVSSSVLLMIIYTTFCDTF. Topologically, residues 223–234 are extracellular; it reads SNPNIDLDKFSL. The helical transmembrane segment at 235-255 threads the bilayer; it reads ILILFIIVSIQLSFMLLTFVF. The Cytoplasmic segment spans residues 256–270; the sequence is STRNNSGFTPADTVA. A helical transmembrane segment spans residues 271–291; it reads IIFCSTHKSLTLGIPMLKIVF. Over 292 to 298 the chain is Extracellular; that stretch reads AGHEHLS. The helical transmembrane segment at 299 to 319 threads the bilayer; sequence LISLPLLIYHPAQILLGSVLV. Residues 320–340 lie on the Cytoplasmic side of the membrane; it reads PTIKSWMVSRQKGVKLTRPTV.

It belongs to the bile acid:sodium symporter (BASS) (TC 2.A.28) family. As to expression, strongly expressed in liver, adrenal gland, small intestine and colon. Moderately expressed in heart, lung, kidney and spleen. Weakly expressed in brain.

The protein resides in the cell membrane. It is found in the endoplasmic reticulum membrane. Its subcellular location is the golgi apparatus membrane. In terms of biological role, involved in teeth and skeletal development. Has an essential role in the biosynthesis and trafficking of glycosaminoglycans and glycoproteins to produce a proper functioning extracellular matrix. Required for extracellular matrix mineralization. Also involved in the regulation of cellular calcium homeostasis. Does not show transport activity towards bile acids or steroid sulfates (including taurocholate, cholate, chenodeoxycholate, estrone-3-sulfate, dehydroepiandrosterone sulfate (DHEAS) and pregnenolone sulfate). This Rattus norvegicus (Rat) protein is Sodium/bile acid cotransporter 7 (Slc10a7).